A 213-amino-acid polypeptide reads, in one-letter code: Glycerol-3-phosphate acyltransferase (213 aa).

Helical transmembrane passes span 3–23 (IIILLLIASYLLGAIPFGLWI), 48–68 (ILGVKAGIAVFIFDLLKGTLA), 71–91 (LPLIFHINGVSPLIFGLLAVI), 119–139 (PFFLLYLLVIFILVLWLFSMI), 144–164 (VVAAIFALLGILIFPSFGFIL), and 165–185 (TSYDLLFSIIIFALAIIIIFR).

Belongs to the PlsY family. As to quaternary structure, probably interacts with PlsX.

It localises to the cell membrane. It carries out the reaction an acyl phosphate + sn-glycerol 3-phosphate = a 1-acyl-sn-glycero-3-phosphate + phosphate. Its pathway is lipid metabolism; phospholipid metabolism. Functionally, catalyzes the transfer of an acyl group from acyl-phosphate (acyl-PO(4)) to glycerol-3-phosphate (G3P) to form lysophosphatidic acid (LPA). This enzyme utilizes acyl-phosphate as fatty acyl donor, but not acyl-CoA or acyl-ACP. This chain is Glycerol-3-phosphate acyltransferase, found in Lactococcus lactis subsp. cremoris (strain SK11).